The primary structure comprises 520 residues: Ribonuclease Y (520 aa).

A helical transmembrane segment spans residues 4 to 24; it reads TVWILISILLATVGAVVGFFV. A disordered region spans residues 86–116; the sequence is KQENRLMQKEENLDRKDETLDKREQQLEKKE. Positions 210-273 constitute a KH domain; that stretch reads TVSVVNLPND…ETARIALDKL (64 aa). Residues 336-429 enclose the HD domain; it reads VLKHSMEVAY…VAAADALSAA (94 aa).

The protein belongs to the RNase Y family.

Its subcellular location is the cell membrane. In terms of biological role, endoribonuclease that initiates mRNA decay. This chain is Ribonuclease Y, found in Bacillus cereus (strain ATCC 10987 / NRS 248).